We begin with the raw amino-acid sequence, 227 residues long: Ion-translocating oxidoreductase complex subunit E (227 aa).

The next 5 membrane-spanning stretches (helical) occupy residues 34–56 (AINAIGLGMTTTLVLTITNTIIS), 68–88 (IPIYMMIISSVVTSIEMLLHA), 91–111 (FNLYQSLGIFIPLIVTNCIIV), 127–147 (FFDGIFIGLGSMFAMFAVGSI), and 181–201 (TIILAVFPPGGFLILGFLIAI).

This sequence belongs to the NqrDE/RnfAE family. As to quaternary structure, the complex is composed of six subunits: RnfA, RnfB, RnfC, RnfD, RnfE and RnfG.

It localises to the cell inner membrane. In terms of biological role, part of a membrane-bound complex that couples electron transfer with translocation of ions across the membrane. This Buchnera aphidicola subsp. Acyrthosiphon pisum (strain APS) (Acyrthosiphon pisum symbiotic bacterium) protein is Ion-translocating oxidoreductase complex subunit E.